Reading from the N-terminus, the 143-residue chain is UPF0201 protein Pars_1985 (143 aa).

The protein belongs to the UPF0201 family.

The sequence is that of UPF0201 protein Pars_1985 from Pyrobaculum arsenaticum (strain DSM 13514 / JCM 11321 / PZ6).